We begin with the raw amino-acid sequence, 617 residues long: Dopamine beta-hydroxylase (617 aa).

The Cytoplasmic portion of the chain corresponds to 1–16 (MPALSRWASLPGPSMR). The chain crosses the membrane as a helical; Signal-anchor for type II membrane protein span at residues 17–37 (EAAFMYSTAVAIFLVILVAAL). Topologically, residues 38–617 (QGSAPRESPL…TVVSIGGGKG (580 aa)) are intragranular. The 117-residue stretch at 57 to 173 (GSLELSWNVS…GTVHLVYGIL (117 aa)) folds into the DOMON domain. A glycan (N-linked (GlcNAc...) asparagine) is linked at Asn64. 6 disulfide bridges follow: Cys154–Cys596, Cys232–Cys283, Cys269–Cys295, Cys390–Cys503, Cys394–Cys565, and Cys466–Cys488. N-linked (GlcNAc...) (complex) asparagine glycosylation is present at Asn184. Tyr230 is an active-site residue. Residues His262 and His263 each coordinate Cu(2+). His333 contributes to the Cu(2+) binding site. Residue Asn344 is glycosylated (N-linked (GlcNAc...) asparagine). His412 is an active-site residue. Cu(2+) contacts are provided by His412, His414, and Met487. N-linked (GlcNAc...) asparagine glycosylation occurs at Asn566. Residues 590 to 617 (EEPTPQCPTSQGRSPAGPTVVSIGGGKG) form a disordered region.

The protein belongs to the copper type II ascorbate-dependent monooxygenase family. In terms of assembly, homotetramer; composed of two disulfide-linked dimers. Cu(2+) serves as cofactor. N-glycosylated. Post-translationally, proteolytic cleavage after the membrane-anchor leads to the release of the soluble form.

It localises to the cytoplasmic vesicle. Its subcellular location is the secretory vesicle lumen. It is found in the secretory vesicle. The protein resides in the chromaffin granule lumen. The protein localises to the secreted. It localises to the secretory vesicle membrane. Its subcellular location is the chromaffin granule membrane. It catalyses the reaction dopamine + 2 L-ascorbate + O2 = (R)-noradrenaline + 2 monodehydro-L-ascorbate radical + H2O. The protein operates within catecholamine biosynthesis; (R)-noradrenaline biosynthesis; (R)-noradrenaline from dopamine: step 1/1. Functionally, catalyzes the hydroxylation of dopamine to noradrenaline (also known as norepinephrine), and is thus vital for regulation of these neurotransmitters. The polypeptide is Dopamine beta-hydroxylase (DBH) (Homo sapiens (Human)).